The sequence spans 507 residues: MTLFRSGIILAFLTFIARIFGLVREQFIASLFGSTPMGDSMNIAFKLPNLFRRIFAEGALSSVFIPIYNEKMLISKKAANNFSGKVFTLLSLTLIVIIALMQIFMPQLILCIAPGFYAKKEKFELTVFLCRITIPYLIFVSLTALLGGILNSVKKFAAFAFSPIILSVCVIIFTLIFGNYIESTISISVSLIIAGILQVVFMFICVKKADLHFPIIFHTNDPDVKKLLINMGPATISSGVQQLNLFISQSISSFIEGAISILAYADRIYQFPLSIIGTSFSTILLPEMSKVYKSNDIVSAQKIQNNAIRIGLLLSLPATFGIIILSHPITNIIYERGVFTPQDTTNTAEAISAFALGLPAFILAKILTPIFYANGDTKTPLKITLFSIIINTNMNLLLMDSLKHIGIAVGTSIAAWYNLGLLYSYSTKQHKLHIEAGIKLFCAKILLCCTLMSIIIALIKHYYLEYLYSEYLLIKVSMLGSTIIIGVAIFFGTAYLLKVVNYDNSTK.

Helical transmembrane passes span 3–23 (LFRS…FGLV), 54–74 (IFAE…KMLI), 92–112 (LTLI…ILCI), 132–152 (ITIP…ILNS), 156–176 (FAAF…FTLI), 185–205 (ISIS…MFIC), 268–288 (IYQF…LPEM), 310–330 (IGLL…HPIT), 351–371 (ISAF…TPIF), 379–399 (TPLK…LLLM), 405–425 (IGIA…LYSY), 438–458 (IKLF…IIAL), and 472–492 (LLIK…IFFG).

It belongs to the MurJ/MviN family.

The protein resides in the cell inner membrane. It functions in the pathway cell wall biogenesis; peptidoglycan biosynthesis. Involved in peptidoglycan biosynthesis. Transports lipid-linked peptidoglycan precursors from the inner to the outer leaflet of the cytoplasmic membrane. This is Probable lipid II flippase MurJ from Rickettsia prowazekii (strain Madrid E).